The sequence spans 367 residues: Leu/Ile/Val-binding protein (367 aa).

An N-terminal signal peptide occupies residues 1–23 (MNMKGKALLAGCIALSLSNMAFA). Cys76 and Cys101 form a disulfide bridge.

This sequence belongs to the leucine-binding protein family.

It is found in the periplasm. This protein is a component of the leucine, isoleucine, valine, (threonine) transport system, which is one of the two periplasmic binding protein-dependent transport systems of the high-affinity transport of the branched-chain amino acids. This chain is Leu/Ile/Val-binding protein (livJ), found in Citrobacter freundii.